Here is a 358-residue protein sequence, read N- to C-terminus: Glutamine synthetase (358 aa).

Positions 26 to 105 (ILAEYIWIDG…VLAECWNADG (80 aa)) constitute a GS beta-grasp domain. Residues 112–358 (HRHECAKIME…IMMETICGGI (247 aa)) form the GS catalytic domain.

Belongs to the glutamine synthetase family. Homooctamer.

The protein localises to the cytoplasm. It carries out the reaction L-glutamate + NH4(+) + ATP = L-glutamine + ADP + phosphate + H(+). This chain is Glutamine synthetase (GLN1), found in Tuber borchii (White truffle).